The chain runs to 91 residues: MLEVWKKWNVRGVVQGVGFRHFVKNVARAIGVRGYVKNEDDGSVTIVAGGNDEQIKELFRRIMEGNGWSYISDYDEIDLPKQEYKDFHVEF.

One can recognise an Acylphosphatase-like domain in the interval 5-91 (WKKWNVRGVV…QEYKDFHVEF (87 aa)). Catalysis depends on residues Arg20 and Asn38.

Belongs to the acylphosphatase family.

It catalyses the reaction an acyl phosphate + H2O = a carboxylate + phosphate + H(+). The protein is Acylphosphatase (acyP) of Fervidobacterium nodosum (strain ATCC 35602 / DSM 5306 / Rt17-B1).